We begin with the raw amino-acid sequence, 314 residues long: Olfactory receptor 5I1 (314 aa).

Over 1-27 (MEFTDRNYTLVTEFILLGFPTRPELQI) the chain is Extracellular. N-linked (GlcNAc...) asparagine glycosylation is present at asparagine 7. The chain crosses the membrane as a helical span at residues 28–48 (VLFLMFLTLYAIILIGNIGLM). The Cytoplasmic segment spans residues 49–56 (LLIRIDPH). The helical transmembrane segment at 57 to 77 (LQTPMYFFLSNLSFVDLCYFS) threads the bilayer. Residues 78-101 (DIVPKMLVNFLSENKSISYYGCAL) are Extracellular-facing. Cysteine 99 and cysteine 191 are joined by a disulfide. Residues 102–122 (QFYFFCTFADTESFILAAMAY) form a helical membrane-spanning segment. Residues 123 to 141 (DRYVAICNPLLYTVVMSRG) are Cytoplasmic-facing. A helical transmembrane segment spans residues 142–162 (ICMRLIVLSYLGGNMSSLVHT). Over 163 to 198 (SFAFILKYCDKNVINHFFCDLPPLLKLSCTDTTINE) the chain is Extracellular. Residues 199–219 (WLLSTYGSSVEIICFIIIIIS) form a helical membrane-spanning segment. Residues 220 to 239 (YFFILLSVLKIRSFSGRKKT) are Cytoplasmic-facing. The helical transmembrane segment at 240 to 260 (FSTCASHLTSVTIYQGTLLFI) threads the bilayer. Topologically, residues 261 to 273 (YSRPSYLYSPNTD) are extracellular. Residues 274-294 (KIISVFYTIFIPVLNPLIYSL) traverse the membrane as a helical segment. The Cytoplasmic segment spans residues 295–314 (RNKDVKDAAEKVLRSKVDSS).

The protein belongs to the G-protein coupled receptor 1 family.

Its subcellular location is the cell membrane. In terms of biological role, odorant receptor. The polypeptide is Olfactory receptor 5I1 (OR5I1) (Homo sapiens (Human)).